The sequence spans 460 residues: tRNA(Ile)-lysidine synthase (460 aa).

37–42 (SGGADS) contacts ATP.

Belongs to the tRNA(Ile)-lysidine synthase family.

Its subcellular location is the cytoplasm. It carries out the reaction cytidine(34) in tRNA(Ile2) + L-lysine + ATP = lysidine(34) in tRNA(Ile2) + AMP + diphosphate + H(+). Functionally, ligates lysine onto the cytidine present at position 34 of the AUA codon-specific tRNA(Ile) that contains the anticodon CAU, in an ATP-dependent manner. Cytidine is converted to lysidine, thus changing the amino acid specificity of the tRNA from methionine to isoleucine. The protein is tRNA(Ile)-lysidine synthase of Treponema denticola (strain ATCC 35405 / DSM 14222 / CIP 103919 / JCM 8153 / KCTC 15104).